A 138-amino-acid polypeptide reads, in one-letter code: Histone H2B (138 aa).

A compositionally biased stretch (basic and acidic residues) spans 1-10; sequence MPPKAAEKKP. The tract at residues 1–47 is disordered; sequence MPPKAAEKKPSTAGKAPAGKAPEKKEAGKKTTAAGGEKKKRSKTRKE. N6-acetyllysine; alternate is present on residues Lys8 and Lys9. Residues Lys8 and Lys9 each participate in a glycyl lysine isopeptide (Lys-Gly) (interchain with G-Cter in SUMO); alternate cross-link. A compositionally biased stretch (low complexity) spans 11-20; that stretch reads STAGKAPAGK. Lys15 is subject to N6-acetyllysine. Lys24 carries the post-translational modification N6-acetyllysine; alternate. Residue Lys24 forms a Glycyl lysine isopeptide (Lys-Gly) (interchain with G-Cter in SUMO); alternate linkage. A Glycyl lysine isopeptide (Lys-Gly) (interchain with G-Cter in SUMO) cross-link involves residue Lys25. Lys132 participates in a covalent cross-link: Glycyl lysine isopeptide (Lys-Gly) (interchain with G-Cter in ubiquitin).

This sequence belongs to the histone H2B family. As to quaternary structure, the nucleosome is a histone octamer containing two molecules each of H2A, H2B, H3 and H4 assembled in one H3-H4 heterotetramer and two H2A-H2B heterodimers. The octamer wraps approximately 147 bp of DNA. In terms of processing, monoubiquitinated to form H2BK123ub1. H2BK123ub1 gives a specific tag for epigenetic transcriptional activation and is also prerequisite for H3K4me and H3K79me formation. H2BK123ub1 also modulates the formation of double-strand breaks during meiosis and is a prerequisite for DNA-damage checkpoint activation. Acetylated by GCN5 to form H2BK11ac and H2BK16ac. H2BK16ac can also be formed by ESA1. Acetylation of N-terminal lysines and particularly formation of H2BK11acK16ac has a positive effect on transcription. Post-translationally, sumoylation to form H2BK6su or H2BK7su, and probably also H2BK16su or H2BK17su, occurs preferentially near the telomeres and represses gene transcription.

It localises to the nucleus. Its subcellular location is the chromosome. Its function is as follows. Core component of nucleosome. Nucleosomes wrap and compact DNA into chromatin, limiting DNA accessibility to the cellular machineries which require DNA as a template. Histones thereby play a central role in transcription regulation, DNA repair, DNA replication and chromosomal stability. DNA accessibility is regulated via a complex set of post-translational modifications of histones, also called histone code, and nucleosome remodeling. This is Histone H2B (HTB1) from Ajellomyces capsulatus (Darling's disease fungus).